The chain runs to 492 residues: Sestrin-1 (492 aa).

The N-terminal domain; may mediate the alkylhydroperoxide reductase activity stretch occupies residues Phe-71–Ser-252. Cys-130 functions as the Cysteine sulfenic acid (-SOH) intermediate in the catalytic mechanism. Residues Ser-293 and Ser-314 each carry the phosphoserine modification. Positions Pro-321–Thr-492 are C-terminal domain; mediates TORC1 regulation. L-leucine is bound by residues Thr-386–Thr-389, Thr-398, and Glu-463.

Belongs to the sestrin family. Interacts with the GATOR2 complex which is composed of MIOS, SEC13, SEH1L, WDR24 and WDR59; the interaction is negatively regulated by leucine. Interacts with RRAGA, RRAGB, RRAGC and RRAGD; may function as a guanine nucleotide dissociation inhibitor for RRAGs and regulate them. Interacts with KEAP1, RBX1 and SQSTM1; in the SQSTM1-dependent autophagic degradation of KEAP1. May interact with PRDX1.

It is found in the nucleus. The protein localises to the cytoplasm. The enzyme catalyses a hydroperoxide + L-cysteinyl-[protein] = S-hydroxy-L-cysteinyl-[protein] + an alcohol. Functionally, functions as an intracellular leucine sensor that negatively regulates the TORC1 signaling pathway through the GATOR complex. In absence of leucine, binds the GATOR subcomplex GATOR2 and prevents TORC1 signaling. Binding of leucine to SESN2 disrupts its interaction with GATOR2 thereby activating the TORC1 signaling pathway. This stress-inducible metabolic regulator may also play a role in protection against oxidative and genotoxic stresses. May positively regulate the transcription by NFE2L2 of genes involved in the response to oxidative stress by facilitating the SQSTM1-mediated autophagic degradation of KEAP1. Moreover, may prevent the accumulation of reactive oxygen species (ROS) through the alkylhydroperoxide reductase activity born by the N-terminal domain of the protein. Was originally reported to contribute to oxidative stress resistance by reducing PRDX1. However, this could not be confirmed. The protein is Sestrin-1 of Macaca fascicularis (Crab-eating macaque).